Consider the following 623-residue polypeptide: Riboflavin biosynthesis protein PYRR, chloroplastic (623 aa).

The transit peptide at 1–45 directs the protein to the chloroplast; it reads MPLPQPLLGGASPAPARAASSFLHPLLHTRHRVSTAPAAASSFVP. The 130-residue stretch at 52–181 folds into the CMP/dCMP-type deaminase domain; sequence ANDAMLLRRA…ALRNEGIQVD (130 aa).

This sequence in the C-terminal section; belongs to the YbiA family.

The protein resides in the plastid. Its subcellular location is the chloroplast. It carries out the reaction 5-amino-6-(5-phospho-D-ribitylamino)uracil + NADP(+) = 5-amino-6-(5-phospho-D-ribosylamino)uracil + NADPH + H(+). The enzyme catalyses 2,5-diamino-6-hydroxy-4-(5-phosphoribosylamino)-pyrimidine + H2O = 2,5,6-triamino-4-hydroxypyrimidine + D-ribose 5-phosphate. The catalysed reaction is 5-amino-6-(5-phospho-D-ribosylamino)uracil + H2O = 5,6-diaminouracil + D-ribose 5-phosphate. Its pathway is cofactor biosynthesis; riboflavin biosynthesis; 5-amino-6-(D-ribitylamino)uracil from GTP: step 3/4. Functionally, pyrimidine reductase involved in the riboflavin biosynthesis pathway. Also has a non-functional N-terminal deaminase domain that lacks the catalytically essential zinc-binding residues. 39% activity when NADH replaces NADPH. No evidence for a phosphatase activity conferred by the N-terminal domain. In terms of biological role, catalyzes the hydrolysis of the N-glycosidic bond in the first two intermediates of riboflavin biosynthesis, which are highly reactive metabolites, yielding relatively innocuous products. Thus, can divert a surplus of harmful intermediates into relatively harmless products and pre-empt the damage these intermediates would otherwise do. Has no activity against GTP, nucleoside monophosphates or ADP-ribose. The sequence is that of Riboflavin biosynthesis protein PYRR, chloroplastic (PYRR) from Zea mays (Maize).